The chain runs to 210 residues: Protein-methionine-sulfoxide reductase heme-binding subunit MsrQ (210 aa).

6 consecutive transmembrane segments (helical) span residues 8 to 28, 37 to 57, 75 to 95, 110 to 130, 147 to 167, and 169 to 189; these read LAVF…AWIF, VLVE…MSMT, LGLW…LFIL, PYII…VTSN, LIYV…RADL, and EWAL…PMIT.

Belongs to the MsrQ family. As to quaternary structure, heterodimer of a catalytic subunit (MsrP) and a heme-binding subunit (MsrQ). FMN is required as a cofactor. Heme b serves as cofactor.

The protein resides in the cell inner membrane. Part of the MsrPQ system that repairs oxidized periplasmic proteins containing methionine sulfoxide residues (Met-O), using respiratory chain electrons. Thus protects these proteins from oxidative-stress damage caused by reactive species of oxygen and chlorine generated by the host defense mechanisms. MsrPQ is essential for the maintenance of envelope integrity under bleach stress, rescuing a wide series of structurally unrelated periplasmic proteins from methionine oxidation. MsrQ provides electrons for reduction to the reductase catalytic subunit MsrP, using the quinone pool of the respiratory chain. The chain is Protein-methionine-sulfoxide reductase heme-binding subunit MsrQ from Pseudomonas savastanoi pv. phaseolicola (strain 1448A / Race 6) (Pseudomonas syringae pv. phaseolicola (strain 1448A / Race 6)).